The chain runs to 547 residues: Elongator complex protein 3 (547 aa).

In terms of domain architecture, Radical SAM core spans 82-372 (RTASGIAVVA…YRVQRDIPMP (291 aa)). [4Fe-4S] cluster-binding residues include Cys-99, Cys-109, and Cys-112. At Ser-161 the chain carries Phosphoserine. An acetyl-CoA-binding site is contributed by Lys-164. At Lys-229 the chain carries N6-methyllysine. Tyr-251 is subject to Phosphotyrosine. An N-acetyltransferase domain is found at 396–547 (IQCRDVRTRE…QGPYMVKMLK (152 aa)). Residues 474 to 477 (ELHV), 497 to 499 (FGM), and Tyr-530 each bind acetyl-CoA.

This sequence belongs to the ELP3 family. In terms of assembly, component of the elongator complex which consists of ELP1, ELP2, ELP3, ELP4, ELP5 and ELP6. ELP1, ELP2 and ELP3 form the elongator core complex. Interacts with alpha-tubulin. [4Fe-4S] cluster serves as cofactor. Tyrosine-phosphorylated. Also serine/threonine-phosphorylated.

Its subcellular location is the cytoplasm. The protein resides in the nucleus. It carries out the reaction uridine(34) in tRNA + acetyl-CoA + S-adenosyl-L-methionine + H2O = 5-(carboxymethyl)uridine(34) in tRNA + 5'-deoxyadenosine + L-methionine + CoA + 2 H(+). The protein operates within tRNA modification; 5-methoxycarbonylmethyl-2-thiouridine-tRNA biosynthesis. In terms of biological role, catalytic tRNA acetyltransferase subunit of the elongator complex which is required for multiple tRNA modifications, including mcm5U (5-methoxycarbonylmethyl uridine), mcm5s2U (5-methoxycarbonylmethyl-2-thiouridine), and ncm5U (5-carbamoylmethyl uridine). In the elongator complex, acts as a tRNA uridine(34) acetyltransferase by mediating formation of carboxymethyluridine in the wobble base at position 34 in tRNAs. May also act as a protein lysine acetyltransferase by mediating acetylation of target proteins; such activity is however unclear in vivo and recent evidences suggest that ELP3 primarily acts as a tRNA acetyltransferase. Involved in neurogenesis: regulates the migration and branching of projection neurons in the developing cerebral cortex, through a process depending on alpha-tubulin acetylation. Required for acetylation of GJA1 in the developing cerebral cortex. This chain is Elongator complex protein 3, found in Mus musculus (Mouse).